The sequence spans 331 residues: ADP,ATP carrier protein 1, mitochondrial (331 aa).

Solcar repeat units lie at residues lysine 29–methionine 122, lysine 134–valine 226, and alanine 238–leucine 320. Transmembrane regions (helical) follow at residues phenylalanine 31–leucine 58, threonine 99–phenylalanine 123, tyrosine 132–phenylalanine 152, phenylalanine 202–leucine 223, and phenylalanine 237–isoleucine 257. Residues arginine 104 and lysine 116 each coordinate ADP. Arginine 261 provides a ligand contact to ADP. The interval arginine 261 to methionine 266 is important for transport activity. The Nucleotide carrier signature motif motif lies at arginine 261 to methionine 266. Residues alanine 297–leucine 317 form a helical membrane-spanning segment.

This sequence belongs to the mitochondrial carrier (TC 2.A.29) family. Monomer.

Its subcellular location is the mitochondrion inner membrane. It carries out the reaction ADP(in) + ATP(out) = ADP(out) + ATP(in). Its activity is regulated as follows. The matrix-open state (m-state) is inhibited by the membrane-permeable bongkrekic acid (BKA). The cytoplasmic-open state (c-state) is inhibited by the membrane-impermeable toxic inhibitor carboxyatractyloside (CATR). In terms of biological role, ADP:ATP antiporter that mediates import of ADP into the mitochondrial matrix for ATP synthesis, and export of ATP out to fuel the cell. Cycles between the cytoplasmic-open state (c-state) and the matrix-open state (m-state): operates by the alternating access mechanism with a single substrate-binding site intermittently exposed to either the cytosolic (c-state) or matrix (m-state) side of the inner mitochondrial membrane. This is ADP,ATP carrier protein 1, mitochondrial (ANT-G1) from Triticum aestivum (Wheat).